The chain runs to 286 residues: 33 kDa chaperonin (286 aa).

Cystine bridges form between Cys225/Cys227 and Cys258/Cys261.

The protein belongs to the HSP33 family. Post-translationally, under oxidizing conditions two disulfide bonds are formed involving the reactive cysteines. Under reducing conditions zinc is bound to the reactive cysteines and the protein is inactive.

Its subcellular location is the cytoplasm. Its function is as follows. Redox regulated molecular chaperone. Protects both thermally unfolding and oxidatively damaged proteins from irreversible aggregation. Plays an important role in the bacterial defense system toward oxidative stress. In Shewanella frigidimarina (strain NCIMB 400), this protein is 33 kDa chaperonin.